The chain runs to 343 residues: UPF0157 protein YqkA (343 aa).

In terms of domain architecture, N-acetyltransferase spans 8 to 144 (KEATIAREIL…VKAAQGLLLS (137 aa)). The segment at 135–343 (VKAAQGLLLS…ENDENGGFTL (209 aa)) is UPF0157.

It in the C-terminal section; belongs to the UPF0157 (GrpB) family.

In Bacillus subtilis (strain 168), this protein is UPF0157 protein YqkA (yqkA).